A 172-amino-acid polypeptide reads, in one-letter code: Folate transporter FolT (172 aa).

The next 5 helical transmembrane spans lie at V6–I26, F35–V55, A71–F91, V101–L121, and V131–I151.

As to quaternary structure, forms a stable energy-coupling factor (ECF) transporter complex composed of a membrane-embedded substrate-binding protein (S component), two ATP-binding proteins (A components) and a transmembrane protein (T component).

It is found in the cell membrane. Folate-binding protein that interacts with the energy-coupling factor (ECF) ABC-transporter complex. Unlike classic ABC transporters this ECF transporter provides the energy necessary to transport a number of different substrates. The substrates themselves are bound by transmembrane, not extracytoplasmic soluble proteins. The sequence is that of Folate transporter FolT (folT) from Clostridium novyi (strain NT).